Reading from the N-terminus, the 123-residue chain is Small ribosomal subunit protein uS12 (123 aa).

A 3-methylthioaspartic acid modification is found at aspartate 89. The tract at residues 102-123 is disordered; the sequence is LDTQGVKDRKQGRSKYGAKRPK. The segment covering 113-123 has biased composition (basic residues); that stretch reads GRSKYGAKRPK.

It belongs to the universal ribosomal protein uS12 family. In terms of assembly, part of the 30S ribosomal subunit. Contacts proteins S8 and S17. May interact with IF1 in the 30S initiation complex.

Its function is as follows. With S4 and S5 plays an important role in translational accuracy. Interacts with and stabilizes bases of the 16S rRNA that are involved in tRNA selection in the A site and with the mRNA backbone. Located at the interface of the 30S and 50S subunits, it traverses the body of the 30S subunit contacting proteins on the other side and probably holding the rRNA structure together. The combined cluster of proteins S8, S12 and S17 appears to hold together the shoulder and platform of the 30S subunit. The chain is Small ribosomal subunit protein uS12 from Magnetococcus marinus (strain ATCC BAA-1437 / JCM 17883 / MC-1).